A 285-amino-acid chain; its full sequence is 2-dehydro-3-deoxyphosphooctonate aldolase (285 aa).

The protein belongs to the KdsA family.

It localises to the cytoplasm. The catalysed reaction is D-arabinose 5-phosphate + phosphoenolpyruvate + H2O = 3-deoxy-alpha-D-manno-2-octulosonate-8-phosphate + phosphate. It functions in the pathway carbohydrate biosynthesis; 3-deoxy-D-manno-octulosonate biosynthesis; 3-deoxy-D-manno-octulosonate from D-ribulose 5-phosphate: step 2/3. Its pathway is bacterial outer membrane biogenesis; lipopolysaccharide biosynthesis. This chain is 2-dehydro-3-deoxyphosphooctonate aldolase, found in Variovorax paradoxus (strain S110).